The following is a 193-amino-acid chain: Oleosin S1-2 (193 aa).

Position 2 is an N-acetylalanine (A2). Residues A2–A39 form a polar region. 3 consecutive transmembrane segments (helical) span residues V37–T57, I66–I86, and G87–M107. The tract at residues V40 to H113 is hydrophobic. The tract at residues A139–T193 is disordered. Positions R142–T193 are enriched in basic and acidic residues.

This sequence belongs to the oleosin family.

The protein localises to the lipid droplet. It is found in the membrane. Functionally, may have a structural role to stabilize the lipid body during desiccation of the seed by preventing coalescence of the oil. Probably interacts with both lipid and phospholipid moieties of lipid bodies. May also provide recognition signals for specific lipase anchorage in lipolysis during seedling growth. In Brassica napus (Rape), this protein is Oleosin S1-2 (S1).